The chain runs to 211 residues: Large ribosomal subunit protein uL3 (211 aa).

This sequence belongs to the universal ribosomal protein uL3 family. In terms of assembly, part of the 50S ribosomal subunit. Forms a cluster with proteins L14 and L19.

One of the primary rRNA binding proteins, it binds directly near the 3'-end of the 23S rRNA, where it nucleates assembly of the 50S subunit. In Geotalea daltonii (strain DSM 22248 / JCM 15807 / FRC-32) (Geobacter daltonii), this protein is Large ribosomal subunit protein uL3.